A 130-amino-acid polypeptide reads, in one-letter code: Small ribosomal subunit protein uS8 (130 aa).

The protein belongs to the universal ribosomal protein uS8 family. In terms of assembly, part of the 30S ribosomal subunit. Contacts proteins S5 and S12.

In terms of biological role, one of the primary rRNA binding proteins, it binds directly to 16S rRNA central domain where it helps coordinate assembly of the platform of the 30S subunit. In Yersinia enterocolitica serotype O:8 / biotype 1B (strain NCTC 13174 / 8081), this protein is Small ribosomal subunit protein uS8.